Here is a 415-residue protein sequence, read N- to C-terminus: tRNA(Met) cytidine acetate ligase (415 aa).

Residues 7–20, glycine 101, asparagine 162, and 187–188 each bind ATP; these read VVEYNPFHNGHRYH and RI.

It belongs to the TmcAL family.

Its subcellular location is the cytoplasm. It carries out the reaction cytidine(34) in elongator tRNA(Met) + acetate + ATP = N(4)-acetylcytidine(34) in elongator tRNA(Met) + AMP + diphosphate. In terms of biological role, catalyzes the formation of N(4)-acetylcytidine (ac(4)C) at the wobble position of elongator tRNA(Met), using acetate and ATP as substrates. First activates an acetate ion to form acetyladenylate (Ac-AMP) and then transfers the acetyl group to tRNA to form ac(4)C34. This chain is tRNA(Met) cytidine acetate ligase, found in Bacillus velezensis (strain DSM 23117 / BGSC 10A6 / LMG 26770 / FZB42) (Bacillus amyloliquefaciens subsp. plantarum).